The sequence spans 485 residues: Probable phosphomannomutase (485 aa).

The Phosphoserine intermediate role is filled by Ser86. Mg(2+)-binding residues include Ser86, Asp236, Asp238, and Asp240.

It belongs to the phosphohexose mutase family. Mg(2+) serves as cofactor.

It catalyses the reaction alpha-D-mannose 1-phosphate = D-mannose 6-phosphate. The sequence is that of Probable phosphomannomutase from Haemophilus influenzae (strain ATCC 51907 / DSM 11121 / KW20 / Rd).